Here is a 123-residue protein sequence, read N- to C-terminus: Large ribosomal subunit protein uL29x (123 aa).

Belongs to the universal ribosomal protein uL29 family.

This Arabidopsis thaliana (Mouse-ear cress) protein is Large ribosomal subunit protein uL29x (RPL35C).